The following is an 81-amino-acid chain: Consomatin Le1 (81 aa).

The first 22 residues, 1–22 (MQTAYWVMVMMMVWITAPLSEG), serve as a signal peptide directing secretion. Residues 23–57 (GKPNDVIRGLVPDDLTPQLILRSLISRRRSDKDVR) constitute a propeptide that is removed on maturation. Glutamate 58 bears the 4-carboxyglutamate mark. A disulfide bond links cysteine 62 and cysteine 67. A D-tryptophan modification is found at tryptophan 64. Residue proline 69 is modified to 4-hydroxyproline. Residues 71–81 (LWRRHDLKGKD) constitute a propeptide that is removed on maturation.

It belongs to the conotoxin C superfamily. Consomatin family. As to expression, expressed by the venom duct.

It is found in the secreted. In terms of biological role, moderately activates human somatostatin receptors (SSTR) with a preferential activation of SSTR1 and SSTR4. In vivo, does not cause behavioral changes in mice within a few minutes of intracranial injection, but causes a progressive loss of movement thereafter. Four to five hours after injection, mice recover, even with the highest dose tested. Shows antinociception and antihyperalgesia activities in two mouse models of acute pain, most probably by acting outside the central nervous system. The polypeptide is Consomatin Le1 (Conus lenavati (Cone snail)).